The primary structure comprises 187 residues: Dihydrofolate reductase (187 aa).

Positions 4-185 (PLNCIVAVSQ…IKYKFEVYEK (182 aa)) constitute a DHFR domain. Residues Ala-10 and 16 to 22 (GIGKNGD) contribute to the NADP(+) site. A substrate-binding site is contributed by 31–36 (EFQYFQ). 55–57 (RKT) provides a ligand contact to NADP(+). Arg-71 lines the substrate pocket. NADP(+) is bound by residues 77–79 (SRE) and 117–124 (GGSSVYKE).

Belongs to the dihydrofolate reductase family. In terms of assembly, homodimer.

The protein localises to the mitochondrion. The protein resides in the cytoplasm. It catalyses the reaction (6S)-5,6,7,8-tetrahydrofolate + NADP(+) = 7,8-dihydrofolate + NADPH + H(+). It functions in the pathway cofactor biosynthesis; tetrahydrofolate biosynthesis; 5,6,7,8-tetrahydrofolate from 7,8-dihydrofolate: step 1/1. Its function is as follows. Key enzyme in folate metabolism. Contributes to the de novo mitochondrial thymidylate biosynthesis pathway. Catalyzes an essential reaction for de novo glycine and purine synthesis, and for DNA precursor synthesis. Binds its own mRNA and that of DHFR2. The polypeptide is Dihydrofolate reductase (DHFR) (Bos taurus (Bovine)).